The following is a 171-amino-acid chain: Adenine phosphoribosyltransferase (171 aa).

The protein belongs to the purine/pyrimidine phosphoribosyltransferase family. Homodimer.

It is found in the cytoplasm. It catalyses the reaction AMP + diphosphate = 5-phospho-alpha-D-ribose 1-diphosphate + adenine. It functions in the pathway purine metabolism; AMP biosynthesis via salvage pathway; AMP from adenine: step 1/1. Catalyzes a salvage reaction resulting in the formation of AMP, that is energically less costly than de novo synthesis. This chain is Adenine phosphoribosyltransferase, found in Trichlorobacter lovleyi (strain ATCC BAA-1151 / DSM 17278 / SZ) (Geobacter lovleyi).